An 80-amino-acid chain; its full sequence is Venom protein HGE029 (80 aa).

Residues 1–22 (MNAKAFLAIFMIALLITDRAEA) form the signal peptide.

It belongs to the non-disulfide-bridged peptide (NDBP) superfamily. Long chain multifunctional peptide (group 2) family. In terms of tissue distribution, expressed by the venom gland.

The protein resides in the secreted. The polypeptide is Venom protein HGE029 (Hoffmannihadrurus gertschi (Scorpion)).